Reading from the N-terminus, the 113-residue chain is Large ribosomal subunit protein bL17 (113 aa).

Belongs to the bacterial ribosomal protein bL17 family. In terms of assembly, part of the 50S ribosomal subunit. Contacts protein L32.

This chain is Large ribosomal subunit protein bL17, found in Syntrophomonas wolfei subsp. wolfei (strain DSM 2245B / Goettingen).